The chain runs to 247 residues: Pulmonary surfactant-associated protein A (247 aa).

The N-terminal stretch at 1 to 19 (MWCSLALILILVTVSGIMC) is a signal peptide. Residue asparagine 20 is glycosylated (N-linked (GlcNAc...) asparagine). Positions 27 to 99 (GSPGIPGTPG…PGERGPPGLP (73 aa)) constitute a Collagen-like domain. 9 positions are modified to 4-hydroxyproline: proline 29, proline 32, proline 35, proline 41, proline 53, proline 56, proline 62, proline 66, and proline 69. The interval 32 to 101 (PGTPGSHGLP…ERGPPGLPAS (70 aa)) is disordered. Over residues 41 to 50 (PGRDGRDGVK) the composition is skewed to basic and acidic residues. The segment covering 53-64 (PGPPGPMGPPGV) has biased composition (pro residues). Over residues 83–92 (ERGDKGDPGE) the composition is skewed to basic and acidic residues. The region spanning 131–247 (LAVGDKVFAT…LQSRLTICEF (117 aa)) is the C-type lectin domain. Intrachain disulfides connect cysteine 154–cysteine 245 and cysteine 223–cysteine 237. Asparagine 206 carries an N-linked (GlcNAc...) asparagine glycan. Ca(2+)-binding residues include glutamate 214, arginine 216, asparagine 233, and aspartate 234.

Belongs to the SFTPA family. As to quaternary structure, oligomeric complex of 6 set of homotrimers.

It localises to the secreted. Its subcellular location is the extracellular space. It is found in the extracellular matrix. The protein localises to the surface film. Its function is as follows. In presence of calcium ions, it binds to surfactant phospholipids and contributes to lower the surface tension at the air-liquid interface in the alveoli of the mammalian lung and is essential for normal respiration. Enhances the expression of MYO18A/SP-R210 on alveolar macrophages. The polypeptide is Pulmonary surfactant-associated protein A (SFTPA1) (Cavia porcellus (Guinea pig)).